Here is a 120-residue protein sequence, read N- to C-terminus: Flagellar protein FliT (120 aa).

The required for homodimerization stretch occupies residues 1–50; the sequence is MTNFIPSLTDWHALHALSITMLDLAHSGKWDELIEQEMNYVQLVEGIARN. The interval 59–97 is fliD binding; the sequence is LINQAKEILNAVLRNEAELKTLLQHRMEELRQLIDQTGK.

Belongs to the FliT family. As to quaternary structure, homodimer. Interacts with FliD and FlhC.

It is found in the cytoplasm. The protein resides in the cytosol. Its function is as follows. Dual-function protein that regulates the transcription of class 2 flagellar operons and that also acts as an export chaperone for the filament-capping protein FliD. As a transcriptional regulator, acts as an anti-FlhDC factor; it directly binds FlhC, thus inhibiting the binding of the FlhC/FlhD complex to class 2 promoters, resulting in decreased expression of class 2 flagellar operons. As a chaperone, effects FliD transition to the membrane by preventing its premature polymerization, and by directing it to the export apparatus. The protein is Flagellar protein FliT of Citrobacter koseri (strain ATCC BAA-895 / CDC 4225-83 / SGSC4696).